We begin with the raw amino-acid sequence, 273 residues long: Progestin and adipoQ receptor family member 4 (273 aa).

5 helical membrane passes run 52–72 (IYTHGLALLGFLVLVPMTMPW), 79–99 (GWLGGTHCVACLVPPAASVLY), 115–135 (LLALDMCGVCLVNTLGALPII), 185–205 (LLVFGARGVGLGSGAPGSLPC), and 245–265 (LLSVGSILQLHAGVVPDLLWA).

It belongs to the ADIPOR family. As to quaternary structure, interacts with CERS2 and CERS5; the interaction regulates CERS2 and CERS5 stabilities and activities and is inhibited in presence of ceramides. Expressed in adipose tissue.

The protein resides in the golgi apparatus membrane. Functionally, plays a role in maintaining adipose tissue function through the regulation of ceramide levels. Mediates the stability of ceramide synthetases, CERS2 and CERS5, and their activities. The sequence is that of Progestin and adipoQ receptor family member 4 from Mus musculus (Mouse).